Here is a 458-residue protein sequence, read N- to C-terminus: uncharacterized protein (458 aa).

2 disordered regions span residues 339-397 and 434-458; these read GTGY…ARIL and YNSE…EDDC. 2 stretches are compositionally biased toward acidic residues: residues 344–390 and 436–458; these read SDSD…EEEP and SEDE…EDDC.

This is an uncharacterized protein from Invertebrate iridescent virus 3 (IIV-3).